Here is a 145-residue protein sequence, read N- to C-terminus: Basic phospholipase A2 S11-61 (145 aa).

The signal sequence occupies residues 1–19 (MYPVHLLVLLAVCVSLLGA). A propeptide spanning residues 20 to 27 (SNIPPQPL) is cleaved from the precursor. Intrachain disulfides connect Cys-38/Cys-98, Cys-54/Cys-144, Cys-56/Cys-72, Cys-71/Cys-125, Cys-78/Cys-118, Cys-87/Cys-111, and Cys-105/Cys-116. Tyr-55, Gly-57, and Gly-59 together coordinate Ca(2+). Residue His-75 is part of the active site. Asp-76 contacts Ca(2+). Asp-119 is an active-site residue.

This sequence belongs to the phospholipase A2 family. Group I subfamily. D49 sub-subfamily. Requires Ca(2+) as cofactor. Expressed by the venom gland.

The protein localises to the secreted. It catalyses the reaction a 1,2-diacyl-sn-glycero-3-phosphocholine + H2O = a 1-acyl-sn-glycero-3-phosphocholine + a fatty acid + H(+). Functionally, snake venom phospholipase A2 (PLA2) that inhibits collagen-induced platelet aggregation. PLA2 catalyzes the calcium-dependent hydrolysis of the 2-acyl groups in 3-sn-phosphoglycerides. This chain is Basic phospholipase A2 S11-61, found in Austrelaps superbus (Lowland copperhead snake).